The chain runs to 678 residues: Ribosome biogenesis protein BOP1 homolog (678 aa).

Over residues Met1–Ser10 the composition is skewed to basic and acidic residues. Positions Met1 to Val73 are disordered. Residues Trp24–Glu63 are compositionally biased toward acidic residues. WD repeat units lie at residues Gly343–Asn384, Gly386–Gln424, Ile463–Pro505, Lys508–Glu548, Ser549–Lys588, Asn592–Gln631, and Ser647–Asp678.

Belongs to the WD repeat BOP1/ERB1 family.

It is found in the nucleus. It localises to the nucleolus. The protein localises to the nucleoplasm. Required for maturation of ribosomal RNAs and formation of the large ribosomal subunit. This Oryza sativa subsp. japonica (Rice) protein is Ribosome biogenesis protein BOP1 homolog.